Reading from the N-terminus, the 265-residue chain is 3-methyl-2-oxobutanoate hydroxymethyltransferase (265 aa).

2 residues coordinate Mg(2+): Asp-44 and Asp-83. Residues 44 to 45, Asp-83, and Lys-113 contribute to the 3-methyl-2-oxobutanoate site; that span reads DS. Glu-115 provides a ligand contact to Mg(2+). Glu-183 (proton acceptor) is an active-site residue.

It belongs to the PanB family. Homodecamer; pentamer of dimers. The cofactor is Mg(2+).

The protein resides in the cytoplasm. It catalyses the reaction 3-methyl-2-oxobutanoate + (6R)-5,10-methylene-5,6,7,8-tetrahydrofolate + H2O = 2-dehydropantoate + (6S)-5,6,7,8-tetrahydrofolate. Its pathway is cofactor biosynthesis; (R)-pantothenate biosynthesis; (R)-pantoate from 3-methyl-2-oxobutanoate: step 1/2. Functionally, catalyzes the reversible reaction in which hydroxymethyl group from 5,10-methylenetetrahydrofolate is transferred onto alpha-ketoisovalerate to form ketopantoate. The chain is 3-methyl-2-oxobutanoate hydroxymethyltransferase from Leptospira borgpetersenii serovar Hardjo-bovis (strain JB197).